The chain runs to 429 residues: Enolase (429 aa).

(2R)-2-phosphoglycerate is bound at residue Q162. E204 serves as the catalytic Proton donor. 3 residues coordinate Mg(2+): D241, E283, and D310. (2R)-2-phosphoglycerate-binding residues include K335, R364, S365, and K386. Residue K335 is the Proton acceptor of the active site.

It belongs to the enolase family. It depends on Mg(2+) as a cofactor.

It localises to the cytoplasm. The protein resides in the secreted. The protein localises to the cell surface. It catalyses the reaction (2R)-2-phosphoglycerate = phosphoenolpyruvate + H2O. The protein operates within carbohydrate degradation; glycolysis; pyruvate from D-glyceraldehyde 3-phosphate: step 4/5. Catalyzes the reversible conversion of 2-phosphoglycerate (2-PG) into phosphoenolpyruvate (PEP). It is essential for the degradation of carbohydrates via glycolysis. This is Enolase from Mycobacterium sp. (strain JLS).